Reading from the N-terminus, the 152-residue chain is Endoribonuclease YbeY (152 aa).

Zn(2+) is bound by residues His-113, His-117, and His-123.

It belongs to the endoribonuclease YbeY family. Requires Zn(2+) as cofactor.

The protein resides in the cytoplasm. Its function is as follows. Single strand-specific metallo-endoribonuclease involved in late-stage 70S ribosome quality control and in maturation of the 3' terminus of the 16S rRNA. This Acidovorax ebreus (strain TPSY) (Diaphorobacter sp. (strain TPSY)) protein is Endoribonuclease YbeY.